The sequence spans 525 residues: Cytochrome P450 4V2 (525 aa).

The chain crosses the membrane as a helical span at residues 13 to 33; it reads LLLWGAASAVSLAGASLVLSL. The heme site is built by Glu-329 and Cys-467.

This sequence belongs to the cytochrome P450 family. Requires heme as cofactor.

It localises to the endoplasmic reticulum membrane. The catalysed reaction is dodecanoate + reduced [NADPH--hemoprotein reductase] + O2 = 12-hydroxydodecanoate + oxidized [NADPH--hemoprotein reductase] + H2O + H(+). The enzyme catalyses tetradecanoate + reduced [NADPH--hemoprotein reductase] + O2 = 14-hydroxytetradecanoate + oxidized [NADPH--hemoprotein reductase] + H2O + H(+). It carries out the reaction hexadecanoate + reduced [NADPH--hemoprotein reductase] + O2 = 16-hydroxyhexadecanoate + oxidized [NADPH--hemoprotein reductase] + H2O + H(+). It catalyses the reaction (5Z,8Z,11Z,14Z,17Z)-eicosapentaenoate + reduced [NADPH--hemoprotein reductase] + O2 = 20-hydroxy-(5Z,8Z,11Z,14Z,17Z)-eicosapentaenoate + oxidized [NADPH--hemoprotein reductase] + H2O + H(+). The catalysed reaction is (4Z,7Z,10Z,13Z,16Z,19Z)-docosahexaenoate + reduced [NADPH--hemoprotein reductase] + O2 = 22-hydroxy-(4Z,7Z,10Z,13Z,16Z,19Z)-docosahexaenoate + oxidized [NADPH--hemoprotein reductase] + H2O + H(+). Its pathway is lipid metabolism; fatty acid metabolism. With respect to regulation, inhibited by N-hydroxy-N'-(4-n-butyl-2-methylphenyl formamidine)(HET0016) with an IC(50) of 38 nM. Its function is as follows. A cytochrome P450 monooxygenase involved in fatty acid metabolism in the eye. Catalyzes the omega-hydroxylation of polyunsaturated fatty acids (PUFAs) docosahexaenoate (DHA) and its precursor eicosapentaenoate (EPA), and may contribute to the homeostasis of these retinal PUFAs. Omega hydroxylates saturated fatty acids such as laurate, myristate and palmitate, the catalytic efficiency decreasing in the following order: myristate &gt; laurate &gt; palmitate (C14&gt;C12&gt;C16). Mechanistically, uses molecular oxygen inserting one oxygen atom into a substrate, and reducing the second into a water molecule, with two electrons provided by NADPH via cytochrome P450 reductase (CPR; NADPH-ferrihemoprotein reductase). The protein is Cytochrome P450 4V2 (CYP4V2) of Pongo abelii (Sumatran orangutan).